The primary structure comprises 140 residues: Putative pre-16S rRNA nuclease (140 aa).

The protein belongs to the YqgF nuclease family.

The protein resides in the cytoplasm. Functionally, could be a nuclease involved in processing of the 5'-end of pre-16S rRNA. The sequence is that of Putative pre-16S rRNA nuclease from Pasteurella multocida (strain Pm70).